Reading from the N-terminus, the 274-residue chain is 2,3,4,5-tetrahydropyridine-2,6-dicarboxylate N-succinyltransferase (274 aa).

2 residues coordinate substrate: R104 and D141.

Belongs to the transferase hexapeptide repeat family. In terms of assembly, homotrimer.

The protein resides in the cytoplasm. It catalyses the reaction (S)-2,3,4,5-tetrahydrodipicolinate + succinyl-CoA + H2O = (S)-2-succinylamino-6-oxoheptanedioate + CoA. The protein operates within amino-acid biosynthesis; L-lysine biosynthesis via DAP pathway; LL-2,6-diaminopimelate from (S)-tetrahydrodipicolinate (succinylase route): step 1/3. The sequence is that of 2,3,4,5-tetrahydropyridine-2,6-dicarboxylate N-succinyltransferase from Yersinia pestis.